The chain runs to 360 residues: Glutamate--cysteine ligase (360 aa).

It belongs to the glutamate--cysteine ligase type 2 family. YbdK subfamily.

It carries out the reaction L-cysteine + L-glutamate + ATP = gamma-L-glutamyl-L-cysteine + ADP + phosphate + H(+). In terms of biological role, catalyzes the synthesis of gamma-glutamylcysteine (gamma-GC), the main low-molecular-weight thiol compound instead of glutathione in halophilic archaea. This Halobacterium salinarum (strain ATCC 29341 / DSM 671 / R1) protein is Glutamate--cysteine ligase.